The following is a 566-amino-acid chain: Unconventional myosin-VIIa (566 aa).

A Myosin motor domain is found at 67-566; the sequence is MMEDMIQHLG…AGVVYYESQG (500 aa). Residue 160–167 participates in ATP binding; that stretch reads GESGAGKT.

It belongs to the TRAFAC class myosin-kinesin ATPase superfamily. Myosin family. As to quaternary structure, might homodimerize in a two headed molecule through the formation of a coiled-coil rod. Identified in a complex with USH1C and USH1G. Interacts with MYRIP. Interacts with RPE65. Interacts with CIB2. May interact with CALM. Interacts with WHRN. Interacts with PLEKHB1 (via PH domain). Interacts with PCDH15. Interacts with TWF2. Interacts with USH1G. Interacts with MYH9. Interacts (via MyTH4-FERM domains) with cytoplasmic regions of ADGRV1 and USH2A. Interacts with PDZD7 (via MyTH4-FERM domains). Interacts with CALML4.

The protein resides in the cytoplasm. The protein localises to the cell cortex. It localises to the cytoskeleton. It is found in the synapse. Myosins are actin-based motor molecules with ATPase activity. Unconventional myosins serve in intracellular movements. Their highly divergent tails bind to membranous compartments, which are then moved relative to actin filaments. In the retina, plays an important role in the renewal of the outer photoreceptor disks. Plays an important role in the distribution and migration of retinal pigment epithelial (RPE) melanosomes and phagosomes, and in the regulation of opsin transport in retinal photoreceptors. In the inner ear, plays an important role in differentiation, morphogenesis and organization of cochlear hair cell bundles. Motor protein that is a part of the functional network formed by USH1C, USH1G, CDH23 and MYO7A that mediates mechanotransduction in cochlear hair cells. Required for normal hearing. Involved in hair-cell vesicle trafficking of aminoglycosides, which are known to induce ototoxicity. The polypeptide is Unconventional myosin-VIIa (MYO7A) (Sus scrofa (Pig)).